Reading from the N-terminus, the 437-residue chain is Isthmin-2 (437 aa).

The N-terminal stretch at 1–25 (MLRARKGLWVLLSVLLAFWIERAIS) is a signal peptide. A disordered region spans residues 156–191 (DSGEDGTGQAEDEEDDYDYDSGEPIPSGLGKTDGDW). The segment covering 165-176 (AEDEEDDYDYDS) has biased composition (acidic residues). A TSP type-1 domain is found at 197–242 (EEKEEEWSTWSPCSVTCGHGNQTRSRSCGDFCTSTESQSCDLVPCP). 3 disulfide bridges follow: Cys209/Cys236, Cys213/Cys241, and Cys224/Cys228. N-linked (GlcNAc...) asparagine glycosylation is present at Asn217. 2 N-linked (GlcNAc...) asparagine glycosylation sites follow: Asn258 and Asn349. In terms of domain architecture, AMOP spans 262–425 (PYGTDVGSCE…LHCMENPQQD (164 aa)).

This sequence belongs to the isthmin family.

It is found in the secreted. This Danio rerio (Zebrafish) protein is Isthmin-2 (ism2).